Consider the following 275-residue polypeptide: MNRLFVAYKPPFVSSNAFLHKIKKRYRVKKAGFSGTLDPFACGTLIIAFGAYTKLFRFLQKYPKRYRTTIWLGASSPSLDIEKIESIQDVPPLDERTIKDIINSFVGEFTYIPPLFSAKKVGGKRAYHFAARGKQIDLKPVTSTIEEISFVHYRHPFITFEATVSEGTYIRSLAEAIAKKLGFPGTLSYLERLAEGKFVYENENPLDPVQYLRTKQNFVKKSKEAIFHGAKLTIDDLAYKEDGEYHILFDDFFAIIRVEKKKVRYLLNQIPRKYQ.

Residue D38 is the Nucleophile of the active site.

The protein belongs to the pseudouridine synthase TruB family. Type 1 subfamily.

It carries out the reaction uridine(55) in tRNA = pseudouridine(55) in tRNA. Its function is as follows. Responsible for synthesis of pseudouridine from uracil-55 in the psi GC loop of transfer RNAs. This chain is tRNA pseudouridine synthase B, found in Nitratiruptor sp. (strain SB155-2).